Reading from the N-terminus, the 578-residue chain is Probable arginine--tRNA ligase, mitochondrial (578 aa).

Residues 1-16 (MACGFRRAIACQLSRV) constitute a mitochondrion transit peptide. L-arginine-binding positions include 133–135 (SPN), His-144, Tyr-322, Asp-326, and Gln-350. A 'HIGH' region motif is present at residues 133-144 (SPNVAKKFHVGH). Lys-568 is modified (N6-acetyllysine).

This sequence belongs to the class-I aminoacyl-tRNA synthetase family.

It localises to the mitochondrion membrane. The catalysed reaction is tRNA(Arg) + L-arginine + ATP = L-arginyl-tRNA(Arg) + AMP + diphosphate. In terms of biological role, catalyzes the attachment of arginine to tRNA(Arg) in a two-step reaction: arginine is first activated by ATP to form Arg-AMP and then transferred to the acceptor end of tRNA(Arg). This chain is Probable arginine--tRNA ligase, mitochondrial (RARS2), found in Homo sapiens (Human).